Consider the following 249-residue polypeptide: Probable transcriptional regulatory protein OTT_1378 (249 aa).

This sequence belongs to the TACO1 family.

The protein localises to the cytoplasm. The chain is Probable transcriptional regulatory protein OTT_1378 from Orientia tsutsugamushi (strain Ikeda) (Rickettsia tsutsugamushi).